The sequence spans 206 residues: dITP/XTP pyrophosphatase (206 aa).

7 to 12 (SSHGYK) contacts substrate. Residue D70 is the Proton acceptor of the active site. D70 contacts Mg(2+). Substrate-binding positions include T71, 154 to 157 (FGYD), K177, and 182 to 183 (HR).

The protein belongs to the HAM1 NTPase family. In terms of assembly, homodimer. Mg(2+) is required as a cofactor.

The enzyme catalyses XTP + H2O = XMP + diphosphate + H(+). The catalysed reaction is dITP + H2O = dIMP + diphosphate + H(+). It catalyses the reaction ITP + H2O = IMP + diphosphate + H(+). Functionally, pyrophosphatase that catalyzes the hydrolysis of nucleoside triphosphates to their monophosphate derivatives, with a high preference for the non-canonical purine nucleotides XTP (xanthosine triphosphate), dITP (deoxyinosine triphosphate) and ITP. Seems to function as a house-cleaning enzyme that removes non-canonical purine nucleotides from the nucleotide pool, thus preventing their incorporation into DNA/RNA and avoiding chromosomal lesions. The sequence is that of dITP/XTP pyrophosphatase from Chlamydia abortus (strain DSM 27085 / S26/3) (Chlamydophila abortus).